The chain runs to 459 residues: MAP kinase-interacting serine/threonine-protein kinase 2 (459 aa).

Residues D37 to K67 form a disordered region. The short motif at K60–K66 is the Nuclear localization signal element. Phosphoserine is present on S74. In terms of domain architecture, Protein kinase spans Q84–V368. ATP is bound by residues L90 to V98 and K113. Residue E160–M162 coordinates staurosporine. D205 (proton acceptor) is an active-site residue. E209 contacts staurosporine. A phosphothreonine mark is found at T244 and T249. 3 residues coordinate Zn(2+): C299, C311, and C314. T379 bears the Phosphothreonine mark. Phosphoserine is present on residues S431 and S434. Positions L438–R442 match the MAP kinase binding motif. Position 446 is a phosphoserine (S446). Position 450 is a phosphothreonine (T450).

The protein belongs to the protein kinase superfamily. CAMK Ser/Thr protein kinase family. As to quaternary structure, interacts with ESR2 and EIF4E in the nucleus. Monomer. Interacts with the C-terminal regions of EIF4G1 and EIF4G2; this interaction is promoted when MAPK pathways are repressed but repressed upon ERK proteins activation. Also binds to dephosphorylated MAPK3/ERK1 and MAPK1/ERK2. Interaction with phosphorylated MAPK3/ERK1 and MAPK1/ERK2 protects it from dephosphorylation and inactivation. Mg(2+) serves as cofactor. The cofactor is Zn(2+). In terms of processing, dual phosphorylation of Thr-244 and Thr-249 activates the kinase. Phosphorylation of Thr-379 activates the kinase. Phosphorylated upon arsenic trioxide As(2)O(3) treatment. Phosphorylated by MAPK1/ERK2, MAPK11 and MAPK14. Dephosphorylated by PP2A. As to expression, ubiquitously expressed in all tissues examined, with high levels in skeletal muscle and low levels in brain.

It localises to the cytoplasm. The protein localises to the nucleus. It is found in the PML body. It carries out the reaction L-seryl-[protein] + ATP = O-phospho-L-seryl-[protein] + ADP + H(+). The catalysed reaction is L-threonyl-[protein] + ATP = O-phospho-L-threonyl-[protein] + ADP + H(+). Inhibited by CGP57380 and staurosporine. Its function is as follows. Serine/threonine-protein kinase that phosphorylates SFPQ/PSF, HNRNPA1 and EIF4E. May play a role in the response to environmental stress and cytokines. Appears to regulate translation by phosphorylating EIF4E, thus increasing the affinity of this protein for the 7-methylguanosine-containing mRNA cap. Required for mediating PP2A-inhibition-induced EIF4E phosphorylation. Triggers EIF4E shuttling from cytoplasm to nucleus. Enhances the formation of EIF4F complex in pachytene spermatocytes, thus promoting mRNA translation during spermatogenesis. Displays a high basal kinase activity. Acts as a mediator of the suppressive effects of IFNgamma on hematopoiesis. Negative regulator for signals that control generation of arsenic trioxide As(2)O(3)-dependent apoptosis and anti-leukemic responses. Involved in anti-apoptotic signaling in response to serum withdrawal. The sequence is that of MAP kinase-interacting serine/threonine-protein kinase 2 (Mknk2) from Mus musculus (Mouse).